A 383-amino-acid polypeptide reads, in one-letter code: Probable mannan endo-1,4-beta-mannosidase A (383 aa).

The signal sequence occupies residues 1 to 21; it reads MKLSNALLTLASLALANVSTA. Asn17 carries an N-linked (GlcNAc...) asparagine glycan. Trp92 is a binding site for substrate. A glycan (N-linked (GlcNAc...) asparagine) is linked at Asn194. Asn205 lines the substrate pocket. Glu206 (proton donor) is an active-site residue. The N-linked (GlcNAc...) asparagine glycan is linked to Asn263. Position 281 (Tyr281) interacts with substrate. The active-site Nucleophile is the Glu314. Substrate is bound at residue Trp344.

The protein belongs to the glycosyl hydrolase 5 (cellulase A) family.

The protein localises to the secreted. The enzyme catalyses Random hydrolysis of (1-&gt;4)-beta-D-mannosidic linkages in mannans, galactomannans and glucomannans.. Its function is as follows. Endo-1,4-mannanase, a crucial enzyme for depolymerization of seed galactomannans and wood galactoglucomannans. This is Probable mannan endo-1,4-beta-mannosidase A (manA) from Aspergillus niger (strain ATCC MYA-4892 / CBS 513.88 / FGSC A1513).